Reading from the N-terminus, the 501-residue chain is Lysine--tRNA ligase (501 aa).

Positions 411 and 418 each coordinate Mg(2+).

Belongs to the class-II aminoacyl-tRNA synthetase family. As to quaternary structure, homodimer. It depends on Mg(2+) as a cofactor.

It is found in the cytoplasm. The catalysed reaction is tRNA(Lys) + L-lysine + ATP = L-lysyl-tRNA(Lys) + AMP + diphosphate. The sequence is that of Lysine--tRNA ligase from Aliivibrio fischeri (strain ATCC 700601 / ES114) (Vibrio fischeri).